We begin with the raw amino-acid sequence, 160 residues long: 6,7-dimethyl-8-ribityllumazine synthase (160 aa).

5-amino-6-(D-ribitylamino)uracil-binding positions include phenylalanine 23, 61-63 (SFE), and 85-87 (AVI). A (2S)-2-hydroxy-3-oxobutyl phosphate-binding site is contributed by 90–91 (DT). Residue histidine 93 is the Proton donor of the active site. 5-amino-6-(D-ribitylamino)uracil is bound at residue phenylalanine 118. Arginine 132 is a binding site for (2S)-2-hydroxy-3-oxobutyl phosphate.

The protein belongs to the DMRL synthase family.

It carries out the reaction (2S)-2-hydroxy-3-oxobutyl phosphate + 5-amino-6-(D-ribitylamino)uracil = 6,7-dimethyl-8-(1-D-ribityl)lumazine + phosphate + 2 H2O + H(+). It participates in cofactor biosynthesis; riboflavin biosynthesis; riboflavin from 2-hydroxy-3-oxobutyl phosphate and 5-amino-6-(D-ribitylamino)uracil: step 1/2. In terms of biological role, catalyzes the formation of 6,7-dimethyl-8-ribityllumazine by condensation of 5-amino-6-(D-ribitylamino)uracil with 3,4-dihydroxy-2-butanone 4-phosphate. This is the penultimate step in the biosynthesis of riboflavin. The sequence is that of 6,7-dimethyl-8-ribityllumazine synthase from Synechococcus sp. (strain CC9311).